Reading from the N-terminus, the 182-residue chain is uncharacterized protein (182 aa).

The protein belongs to the mimivirus L28/L54 family.

This is an uncharacterized protein from Acanthamoeba polyphaga (Amoeba).